Consider the following 269-residue polypeptide: Phosphatidylglycerophosphate phosphatase 1, chloroplastic (269 aa).

The transit peptide at 1-33 (MRSVPGPSPPCTRSLAHSCRAAARGPCGSARPR) directs the protein to the chloroplast. Residues 25–46 (GPCGSARPRARSVSARAHSSEA) are disordered. Residues 29 to 46 (SARPRARSVSARAHSSEA) are compositionally biased toward low complexity. The short motif at 103–107 (DKDNT) is the Phosphoryl acceptor element.

This sequence belongs to the HAD-like hydrolase superfamily.

Its subcellular location is the plastid. It localises to the chloroplast. The enzyme catalyses a 1,2-diacyl-sn-glycero-3-phospho-(1'-sn-glycero-3'-phosphate) + H2O = a 1,2-diacyl-sn-glycero-3-phospho-(1'-sn-glycerol) + phosphate. Its pathway is phospholipid metabolism; phosphatidylglycerol biosynthesis; phosphatidylglycerol from CDP-diacylglycerol: step 2/2. Its function is as follows. Phosphatidylglycerophosphate phosphatase involved in the biosynthesis of phosphatidylglycerol (PG), a phosphoglycerolipid predominantly present in chloroplastic thylakoid membranes and which has important photosynthetic function. Required for thylakoid membranes development and chloroplast function. This chain is Phosphatidylglycerophosphate phosphatase 1, chloroplastic, found in Chlamydomonas reinhardtii (Chlamydomonas smithii).